The following is a 577-amino-acid chain: PTS system lactose-specific EIICB component (577 aa).

A PTS EIIC type-3 domain is found at valine 4–phenylalanine 405. 9 helical membrane passes run glycine 27 to valine 47, leucine 63 to alanine 83, isoleucine 100 to proline 120, glutamine 133 to isoleucine 153, leucine 176 to alanine 196, tyrosine 219 to glycine 239, valine 280 to alanine 300, phenylalanine 326 to valine 346, and leucine 386 to isoleucine 406. Residues glutamate 476–leucine 577 enclose the PTS EIIB type-3 domain. Residue cysteine 483 is the Phosphocysteine intermediate; for EIIB activity of the active site. At cysteine 483 the chain carries Phosphocysteine; by EIIA.

It is found in the cell membrane. The enzyme catalyses lactose(out) + N(pros)-phospho-L-histidyl-[protein] = lactose 6-phosphate(in) + L-histidyl-[protein]. In terms of biological role, the phosphoenolpyruvate-dependent sugar phosphotransferase system (sugar PTS), a major carbohydrate active transport system, catalyzes the phosphorylation of incoming sugar substrates concomitantly with their translocation across the cell membrane. The enzyme II LacEF PTS system is involved in lactose transport. This chain is PTS system lactose-specific EIICB component, found in Lacticaseibacillus casei (Lactobacillus casei).